We begin with the raw amino-acid sequence, 453 residues long: Bis(5'-adenosyl)-triphosphatase ENPP4 (453 aa).

Residues 1–18 (MKLLLMLLFSGLMTGCRG) form the signal peptide. The Extracellular segment spans residues 19 to 407 (NSSSASPPKL…DQWCINLPEA (389 aa)). The Zn(2+) site is built by aspartate 34 and threonine 70. The AMP-threonine intermediate role is filled by threonine 70. Substrate is bound by residues asparagine 91 and tyrosine 154. A glycan (N-linked (GlcNAc...) asparagine) is linked at asparagine 166. Residues aspartate 189, histidine 193, aspartate 237, and histidine 238 each coordinate Zn(2+). Residue aspartate 189 participates in substrate binding. A disulfide bridge links cysteine 254 with cysteine 287. Asparagine 276 carries N-linked (GlcNAc...) asparagine glycosylation. Histidine 336 serves as a coordination point for Zn(2+). A disulfide bridge links cysteine 394 with cysteine 401. Residues 408 to 428 (IGIVIGALLVLTTLTCLIIIM) form a helical membrane-spanning segment. The Cytoplasmic portion of the chain corresponds to 429–453 (QNRVSGPRPFSRLQLQEDDDDPLIG).

It belongs to the nucleotide pyrophosphatase/phosphodiesterase family. It depends on Zn(2+) as a cofactor.

The protein resides in the cell membrane. The catalysed reaction is P(1),P(3)-bis(5'-adenosyl) triphosphate + H2O = AMP + ADP + 2 H(+). Hydrolyzes extracellular Ap3A into AMP and ADP, and Ap4A into AMP and ATP. Ap3A and Ap4A are diadenosine polyphosphates thought to induce proliferation of vascular smooth muscle cells. Acts as a procoagulant, mediating platelet aggregation at the site of nascent thrombus via release of ADP from Ap3A and activation of ADP receptors. The polypeptide is Bis(5'-adenosyl)-triphosphatase ENPP4 (ENPP4) (Bos taurus (Bovine)).